Consider the following 86-residue polypeptide: Small ribosomal subunit protein bS20 (86 aa).

This sequence belongs to the bacterial ribosomal protein bS20 family.

Functionally, binds directly to 16S ribosomal RNA. This Rhodococcus opacus (strain B4) protein is Small ribosomal subunit protein bS20.